We begin with the raw amino-acid sequence, 157 residues long: Small ribosomal subunit protein uS7 (157 aa).

It belongs to the universal ribosomal protein uS7 family. Part of the 30S ribosomal subunit. Contacts proteins S9 and S11.

Functionally, one of the primary rRNA binding proteins, it binds directly to 16S rRNA where it nucleates assembly of the head domain of the 30S subunit. Is located at the subunit interface close to the decoding center, probably blocks exit of the E-site tRNA. The polypeptide is Small ribosomal subunit protein uS7 (Paracidovorax citrulli (strain AAC00-1) (Acidovorax citrulli)).